The chain runs to 35 residues: Photosystem II reaction center protein M (35 aa).

The helical transmembrane segment at 5–25 (ILAFVATALFILIPTAFLLIL) threads the bilayer.

The protein belongs to the PsbM family. In terms of assembly, PSII is composed of 1 copy each of membrane proteins PsbA, PsbB, PsbC, PsbD, PsbE, PsbF, PsbH, PsbI, PsbJ, PsbK, PsbL, PsbM, PsbT, PsbX, PsbY, PsbZ, Psb30/Ycf12, at least 3 peripheral proteins of the oxygen-evolving complex and a large number of cofactors. It forms dimeric complexes.

It is found in the plastid. The protein localises to the chloroplast thylakoid membrane. One of the components of the core complex of photosystem II (PSII). PSII is a light-driven water:plastoquinone oxidoreductase that uses light energy to abstract electrons from H(2)O, generating O(2) and a proton gradient subsequently used for ATP formation. It consists of a core antenna complex that captures photons, and an electron transfer chain that converts photonic excitation into a charge separation. This subunit is found at the monomer-monomer interface. The polypeptide is Photosystem II reaction center protein M (Adiantum capillus-veneris (Maidenhair fern)).